The sequence spans 242 residues: MRLGVNVDHVATVRQARRTFEPSPVFAALIAQQAGADQITLHLREDRRHIQDRDLELIKELITIPVNLEMAPTEEMREIALRVKPDRITLVPERREEITTEGGLDVVSLKEKLKEYLKPIKEAGIEVSLFIEAQKEQIDASVEVGADAIEIHTGRYANLWNEHRFEEAKEELNRIKEAAIYAKEKGLKVYAGHGLTYHNVKDFVRELKGYVEELNIGHSIVANAVIFGFERAVKEMLNLIKT.

Asn6 is a 3-amino-2-oxopropyl phosphate binding site. 8–9 (DH) contributes to the 1-deoxy-D-xylulose 5-phosphate binding site. Arg17 lines the 3-amino-2-oxopropyl phosphate pocket. The Proton acceptor role is filled by His42. The 1-deoxy-D-xylulose 5-phosphate site is built by Arg44 and His49. The active-site Proton acceptor is Glu69. Thr99 contributes to the 1-deoxy-D-xylulose 5-phosphate binding site. His193 functions as the Proton donor in the catalytic mechanism. Residues Gly194 and 217–218 (GH) contribute to the 3-amino-2-oxopropyl phosphate site.

Belongs to the PNP synthase family. As to quaternary structure, homooctamer; tetramer of dimers.

The protein localises to the cytoplasm. The catalysed reaction is 3-amino-2-oxopropyl phosphate + 1-deoxy-D-xylulose 5-phosphate = pyridoxine 5'-phosphate + phosphate + 2 H2O + H(+). It participates in cofactor biosynthesis; pyridoxine 5'-phosphate biosynthesis; pyridoxine 5'-phosphate from D-erythrose 4-phosphate: step 5/5. In terms of biological role, catalyzes the complicated ring closure reaction between the two acyclic compounds 1-deoxy-D-xylulose-5-phosphate (DXP) and 3-amino-2-oxopropyl phosphate (1-amino-acetone-3-phosphate or AAP) to form pyridoxine 5'-phosphate (PNP) and inorganic phosphate. This chain is Pyridoxine 5'-phosphate synthase, found in Aquifex aeolicus (strain VF5).